The chain runs to 122 residues: Guanine nucleotide exchange factor MSS4 homolog (122 aa).

Positions 9-120 constitute an MSS4 domain; sequence EQITDGKNKS…YLALKRVVHK (112 aa). Zn(2+) is bound by residues Cys22, Cys25, Cys92, and Cys95.

This sequence belongs to the DSS4/MSS4 family. As to quaternary structure, interacts with Rab8.

It localises to the basal cell membrane. Guanine-nucleotide-releasing protein that acts on members of the sec4/ypt1/rab subfamily such as Rab8. During egg development, essential for establishing and maintaining epithelial cell polarity by regulating the correct polarized deposition of basal membrane (BM) proteins such as trol/Pcan and vkg/Coll IV to the basal surface of follicular epithelial (FE) cells. Likely to function by restricting the activity of the vesicle transport regulator Rab8 to the basal membrane, and thus directs BM protein-containing vesicles to the basal side of the FE cells. This function is independent of the Crag/Rab10 regulation of polarized BM protein secretion in the FE. This is Guanine nucleotide exchange factor MSS4 homolog from Drosophila melanogaster (Fruit fly).